The sequence spans 229 residues: MPKEGKKLQEARKQFDKNTLYEPLEALEMVKKTATAKFDETVEVAFRLGVDPRHADQQLRGAVVLPHGTGKTKTVLVFAKGDKAKEAEAAGADFVGAEDMLEKIQGGWLGFDVAIATPDMMGTVGRLGRVLGPRGLMPNPKTGTVTFEVGDAVRDAKGGKITYRTDKVGIIHAPIGKASFDTQKLAENFKTLADTLVRIKPASAKGTYMKTITVSSTMGPGVRINPNKL.

The protein belongs to the universal ribosomal protein uL1 family. Part of the 50S ribosomal subunit.

In terms of biological role, binds directly to 23S rRNA. The L1 stalk is quite mobile in the ribosome, and is involved in E site tRNA release. Functionally, protein L1 is also a translational repressor protein, it controls the translation of the L11 operon by binding to its mRNA. The protein is Large ribosomal subunit protein uL1 of Desulforamulus reducens (strain ATCC BAA-1160 / DSM 100696 / MI-1) (Desulfotomaculum reducens).